The chain runs to 303 residues: Regulatory protein PocR (303 aa).

An HTH araC/xylS-type domain is found at 195–293 (KKALRYIDAH…QVTPQAYRQQ (99 aa)). 2 consecutive DNA-binding regions (H-T-H motif) follow at residues 212 to 233 (EDVA…KKYQ) and 260 to 283 (IASI…RQTY).

Its pathway is cofactor biosynthesis; adenosylcobalamin biosynthesis [regulation]. The protein operates within polyol metabolism; 1,2-propanediol degradation [regulation]. Positive regulatory protein of pdu and cob operons. Positively autoregulates its own expression. This is Regulatory protein PocR (pocR) from Salmonella typhimurium (strain LT2 / SGSC1412 / ATCC 700720).